An 814-amino-acid chain; its full sequence is Echinoderm microtubule-associated protein-like 1 (814 aa).

A coiled-coil region spans residues 31–72 (SMEVSDRIASLEQRVQMQEDDIQLLKSALADVVRRLNITEEQ). Positions 77–180 (NRKGPTKARP…ESKPKEPAFS (104 aa)) are disordered. Residues 92 to 101 (PLRTTVNNGT) show a composition bias toward polar residues. Residues 103–115 (LPKKPSASLPAPS) show a composition bias toward low complexity. Polar residues predominate over residues 127–137 (KSINRTSSSER). A compositionally biased stretch (basic and acidic residues) spans 142–152 (GRRESSGDSKG). Over residues 155–167 (NRTGSTSSSSSGK) the composition is skewed to low complexity. The tandem atypical propeller in EMLs stretch occupies residues 175-814 (KEPAFSPEEG…DTSIMQWRVI (640 aa)). WD repeat units lie at residues 260-309 (EQLQ…IWDS), 314-357 (TLHV…VWDW), 362-399 (RLADVKCSNEAVFAADFHPTDTNIIVTCGKSHLYFWTL), 408-445 (QGLFEKQEKPKFVLCVTFSENGDTITGDSSGNILVWGK), 449-488 (RISYAVQGAHEGGIFALCMLRDGTLVSGGGKDRRLISWNG), 492-529 (KLHKAEIPEQFGPIRTVAEGKGNVILIGTTRNFVLQGT), 534-571 (FTPITQGHTDELWGLAIHASKPQFLTCGHDKHATLWDA), 577-612 (VWDKIIEDPAQSSGFHPSGSVVAVGTLTGRWFVFDT), 616-654 (DLVTVHTDGNEQLSVMRYSPDGNFLAIGSHDNCIYIYGV), 663-700 (RVGKCSGHSSFITHLDWSVNSQFLVSNSGDYEILYWVP), 708-767 (SVET…LFSY), and 774-813 (APSHIYSGHSSHVTNVDFLCEDSHLISTGGKDTSIMQWRV).

This sequence belongs to the WD repeat EMAP family. In terms of assembly, homotrimer; self-association is mediated by the N-terminal coiled coil. Does not interact with EML3. Binds unpolymerized tubulins via its WD repeat region. Binds repolymerizing microtubules. Interacts with TASOR. In terms of tissue distribution, detected in adult brain cortex, hippocampus and thalamus. Expressed in the stomach, lungs and in Sertoli cells of the testis.

Its subcellular location is the cytoplasm. It is found in the perinuclear region. It localises to the cytoskeleton. Functionally, modulates the assembly and organization of the microtubule cytoskeleton, and probably plays a role in regulating the orientation of the mitotic spindle and the orientation of the plane of cell division. Required for normal proliferation of neuronal progenitor cells in the developing brain and for normal brain development. Does not affect neuron migration per se. The sequence is that of Echinoderm microtubule-associated protein-like 1 (Eml1) from Mus musculus (Mouse).